We begin with the raw amino-acid sequence, 372 residues long: NAD(P)H-quinone oxidoreductase subunit 1 (372 aa).

8 consecutive transmembrane segments (helical) span residues 27-47, 97-117, 128-148, 176-196, 204-224, 266-286, 308-328, and 347-367; these read IIWLPIPMLLVLVAAVVGVLV, ILFTAGPILVLVPVILSWLIV, VGIGIFLWIALSSIQPIGLLM, LALSVLAIVLMTNSLSTIDIV, ILSWNIWRQPVGFIVFWICAL, ILSALLVSILYLGGWGFPIPV, SIGIVMTVLKAYLLVFIAILL, and FLLPISLANLLITAGLKLAFP.

Belongs to the complex I subunit 1 family. As to quaternary structure, NDH-1 is composed of at least 11 different subunits.

Its subcellular location is the cellular thylakoid membrane. The enzyme catalyses a plastoquinone + NADH + (n+1) H(+)(in) = a plastoquinol + NAD(+) + n H(+)(out). The catalysed reaction is a plastoquinone + NADPH + (n+1) H(+)(in) = a plastoquinol + NADP(+) + n H(+)(out). In terms of biological role, NDH-1 shuttles electrons from an unknown electron donor, via FMN and iron-sulfur (Fe-S) centers, to quinones in the respiratory and/or the photosynthetic chain. The immediate electron acceptor for the enzyme in this species is believed to be plastoquinone. Couples the redox reaction to proton translocation, and thus conserves the redox energy in a proton gradient. This chain is NAD(P)H-quinone oxidoreductase subunit 1, found in Prochlorococcus marinus (strain MIT 9312).